The primary structure comprises 658 residues: Structure-specific endonuclease subunit SLX1 (658 aa).

In terms of domain architecture, GIY-YIG spans 12–92 (PFYACYFLRS…AKPHLSRHLK (81 aa)). Disordered stretches follow at residues 29–52 (YIGS…QGAY), 239–269 (GVAE…ETLP), 288–328 (PIPQ…NGVD), and 594–658 (TTSR…IDLT). Composition is skewed to basic and acidic residues over residues 308–324 (KLSD…HDAE) and 627–640 (SKID…DTKK). The span at 641–652 (NTTQKAKSNETS) shows a compositional bias: polar residues.

The protein belongs to the SLX1 family. Forms a heterodimer with SLX4. Requires a divalent metal cation as cofactor.

The protein resides in the nucleus. In terms of biological role, catalytic subunit of the SLX1-SLX4 structure-specific endonuclease that resolves DNA secondary structures generated during DNA repair and recombination. Has endonuclease activity towards branched DNA substrates, introducing single-strand cuts in duplex DNA close to junctions with ss-DNA. This chain is Structure-specific endonuclease subunit SLX1, found in Mycosarcoma maydis (Corn smut fungus).